The sequence spans 713 residues: Polyribonucleotide nucleotidyltransferase (713 aa).

Residues Asp-498 and Asp-504 each coordinate Mg(2+). The KH domain maps to 565-631; it reads PRILSLKVPV…RIEDLTREAK (67 aa). The region spanning 633–701 is the S1 motif domain; the sequence is GEIYEGTVTR…ERGKIDLIRP (69 aa).

It belongs to the polyribonucleotide nucleotidyltransferase family. Mg(2+) is required as a cofactor.

The protein resides in the cytoplasm. The enzyme catalyses RNA(n+1) + phosphate = RNA(n) + a ribonucleoside 5'-diphosphate. Its function is as follows. Involved in mRNA degradation. Catalyzes the phosphorolysis of single-stranded polyribonucleotides processively in the 3'- to 5'-direction. In Thermus thermophilus (strain ATCC 27634 / DSM 579 / HB8), this protein is Polyribonucleotide nucleotidyltransferase.